Reading from the N-terminus, the 376-residue chain is 5-amino-6-(D-ribitylamino)uracil--L-tyrosine 4-hydroxyphenyl transferase 1 (376 aa).

Residues 50-284 enclose the Radical SAM core domain; sequence VTYVVNRNIN…AISRILLHGH (235 aa). 3 residues coordinate [4Fe-4S] cluster: C64, C68, and C71.

Belongs to the radical SAM superfamily. CofH family. In terms of assembly, consists of two subunits, CofG and CofH. [4Fe-4S] cluster is required as a cofactor.

It catalyses the reaction 5-amino-6-(D-ribitylamino)uracil + L-tyrosine + S-adenosyl-L-methionine = 5-amino-5-(4-hydroxybenzyl)-6-(D-ribitylimino)-5,6-dihydrouracil + 2-iminoacetate + 5'-deoxyadenosine + L-methionine + H(+). Its pathway is cofactor biosynthesis; coenzyme F0 biosynthesis. In terms of biological role, catalyzes the radical-mediated synthesis of 5-amino-5-(4-hydroxybenzyl)-6-(D-ribitylimino)-5,6-dihydrouracil from 5-amino-6-(D-ribitylamino)uracil and L-tyrosine. The sequence is that of 5-amino-6-(D-ribitylamino)uracil--L-tyrosine 4-hydroxyphenyl transferase 1 from Methanosarcina barkeri (strain Fusaro / DSM 804).